We begin with the raw amino-acid sequence, 542 residues long: Chondroitin sulfate N-acetylgalactosaminyltransferase 2 (542 aa).

Residues 1–11 (MPRRGLILHTR) lie on the Cytoplasmic side of the membrane. A helical; Signal-anchor for type II membrane protein membrane pass occupies residues 12-32 (THWLLLGLALLCSLVLFMYLL). The Lumenal portion of the chain corresponds to 33 to 542 (ECAPQTDGNA…AYRTNSEAVG (510 aa)). N41 carries an N-linked (GlcNAc...) asparagine glycan. A coiled-coil region spans residues 59–105 (ALLQEQEEHYQTRATSLKRQIAQLKQELQEMSEKMRSLQERRNVGAN). A glycan (N-linked (GlcNAc...) asparagine) is linked at N333. D369 and H486 together coordinate a divalent metal cation.

Belongs to the chondroitin N-acetylgalactosaminyltransferase family. Ubiquitous.

It is found in the golgi apparatus. It localises to the golgi stack membrane. The catalysed reaction is 3-O-(beta-D-GlcA-(1-&gt;3)-beta-D-Gal-(1-&gt;3)-beta-D-Gal-(1-&gt;4)-beta-D-Xyl)-L-seryl-[protein] + UDP-N-acetyl-alpha-D-galactosamine = 3-O-(beta-D-GalNAc-(1-&gt;4)-beta-D-GlcA-(1-&gt;3)-beta-D-Gal-(1-&gt;3)-beta-D-Gal-(1-&gt;4)-beta-D-Xyl)-L-seryl-[protein] + UDP + H(+). Its function is as follows. Transfers 1,4-N-acetylgalactosamine (GalNAc) from UDP-GalNAc to the non-reducing end of glucuronic acid (GlcUA). Required for addition of the first GalNAc to the core tetrasaccharide linker and for elongation of chondroitin chains. The polypeptide is Chondroitin sulfate N-acetylgalactosaminyltransferase 2 (CSGALNACT2) (Homo sapiens (Human)).